The chain runs to 322 residues: Cytochrome f (322 aa).

An N-terminal signal peptide occupies residues M1 to A37. Residues Y38, C58, C61, and H62 each contribute to the heme site. Residues V285–L307 traverse the membrane as a helical segment.

Belongs to the cytochrome f family. As to quaternary structure, the 4 large subunits of the cytochrome b6-f complex are cytochrome b6, subunit IV (17 kDa polypeptide, petD), cytochrome f and the Rieske protein, while the 4 small subunits are PetG, PetL, PetM and PetN. The complex functions as a dimer. It depends on heme as a cofactor.

The protein resides in the plastid. It is found in the chloroplast thylakoid membrane. In terms of biological role, component of the cytochrome b6-f complex, which mediates electron transfer between photosystem II (PSII) and photosystem I (PSI), cyclic electron flow around PSI, and state transitions. The chain is Cytochrome f (petA) from Anthoceros angustus (Hornwort).